We begin with the raw amino-acid sequence, 706 residues long: Probable tape measure protein (706 aa).

Residues 9 to 113 (QAELETKGVL…TRLSTELAKV (105 aa)) adopt a coiled-coil conformation. 3 EF-hand domains span residues 271–290 (GSGT…ALGA), 361–380 (KDGQ…GFTS), and 496–521 (KIID…AKDA). Residues Asp-499, Asn-501, Asp-503, Lys-505, and Glu-510 each coordinate Ca(2+).

The protein belongs to the Mulikevirus tape measure protein family.

In terms of biological role, serves as a base for tail tube protein polymerization and acts as a template for tail length determination. In Lactococcus phage c2, this protein is Probable tape measure protein.